The sequence spans 251 residues: MEQNNCKIRTWFAKLALAQKVFLGVIPLFFICFVFVIADIVISLQNKGHIIEEIDKFTNQSNVMLLIYACWYVSKPKSHYLKNQQFFLSAFAYIIFTFLGYNVILAASQQAYSDKDAYSLASSVFLHVLAPIAFLVAGIVKMKTDKDVTFNHFWKSLGYFMIYPLVYGLYLATIPYVRGHYVSDDGKSTTYVVYGEITNTKDNPIVAWPVVICFLFIYFPLSFLAVYALQCKLLNRPLKAQFKCATNKCPK.

Helical transmembrane passes span 22-42 (FLGV…DIVI), 86-106 (FFLS…VILA), 120-140 (LASS…AGIV), 157-177 (LGYF…IPYV), and 205-225 (IVAW…SFLA).

It is found in the cell membrane. This is an uncharacterized protein from Mycoplasma pneumoniae (strain ATCC 29342 / M129 / Subtype 1) (Mycoplasmoides pneumoniae).